A 290-amino-acid chain; its full sequence is Porphobilinogen deaminase (290 aa).

An S-(dipyrrolylmethanemethyl)cysteine modification is found at cysteine 237.

This sequence belongs to the HMBS family. Monomer. Dipyrromethane serves as cofactor.

The enzyme catalyses 4 porphobilinogen + H2O = hydroxymethylbilane + 4 NH4(+). The protein operates within porphyrin-containing compound metabolism; protoporphyrin-IX biosynthesis; coproporphyrinogen-III from 5-aminolevulinate: step 2/4. Its function is as follows. Tetrapolymerization of the monopyrrole PBG into the hydroxymethylbilane pre-uroporphyrinogen in several discrete steps. The sequence is that of Porphobilinogen deaminase from Clostridium botulinum (strain Kyoto / Type A2).